The primary structure comprises 285 residues: D-apionate oxidoisomerase (285 aa).

NAD(+)-binding positions include 15 to 17 (GKM), Glu-36, and Asp-71. Zn(2+) is bound by residues His-116 and Glu-186.

This sequence belongs to the ApnO family. Requires Zn(2+) as cofactor.

The enzyme catalyses D-apionate + NAD(+) = 3-oxoisoapionate + NADH + H(+). It functions in the pathway carbohydrate metabolism. In terms of biological role, involved in catabolism of D-apiose. Catalyzes the conversion of D-apionate to 3-oxo-isoapionate. The polypeptide is D-apionate oxidoisomerase (Pectobacterium atrosepticum (strain SCRI 1043 / ATCC BAA-672) (Erwinia carotovora subsp. atroseptica)).